The chain runs to 202 residues: Recombination protein RecR (202 aa).

The C4-type zinc finger occupies 57 to 72 (CRDCRTFTEDDICAVC). The region spanning 81–176 (GQICVVESPA…PATRIAHGVP (96 aa)) is the Toprim domain.

This sequence belongs to the RecR family.

Its function is as follows. May play a role in DNA repair. It seems to be involved in an RecBC-independent recombinational process of DNA repair. It may act with RecF and RecO. The sequence is that of Recombination protein RecR from Photobacterium profundum (strain SS9).